The sequence spans 297 residues: UDP-N-acetylenolpyruvoylglucosamine reductase (297 aa).

Positions 26-191 (QTGGPAEYLA…IAATFALKAG (166 aa)) constitute an FAD-binding PCMH-type domain. The active site involves Arg170. Ser220 acts as the Proton donor in catalysis. The active site involves Glu290.

The protein belongs to the MurB family. Requires FAD as cofactor.

Its subcellular location is the cytoplasm. It carries out the reaction UDP-N-acetyl-alpha-D-muramate + NADP(+) = UDP-N-acetyl-3-O-(1-carboxyvinyl)-alpha-D-glucosamine + NADPH + H(+). The protein operates within cell wall biogenesis; peptidoglycan biosynthesis. Cell wall formation. The chain is UDP-N-acetylenolpyruvoylglucosamine reductase from Lactobacillus delbrueckii subsp. bulgaricus (strain ATCC 11842 / DSM 20081 / BCRC 10696 / JCM 1002 / NBRC 13953 / NCIMB 11778 / NCTC 12712 / WDCM 00102 / Lb 14).